Consider the following 217-residue polypeptide: Ribose-5-phosphate isomerase A (217 aa).

Substrate-binding positions include 28 to 31, 81 to 84, and 94 to 97; these read TGST, DGAD, and KGGG. E103 acts as the Proton acceptor in catalysis. K121 lines the substrate pocket.

It belongs to the ribose 5-phosphate isomerase family. Homodimer.

It carries out the reaction aldehydo-D-ribose 5-phosphate = D-ribulose 5-phosphate. Its pathway is carbohydrate degradation; pentose phosphate pathway; D-ribose 5-phosphate from D-ribulose 5-phosphate (non-oxidative stage): step 1/1. Its function is as follows. Catalyzes the reversible conversion of ribose-5-phosphate to ribulose 5-phosphate. This Aeromonas hydrophila subsp. hydrophila (strain ATCC 7966 / DSM 30187 / BCRC 13018 / CCUG 14551 / JCM 1027 / KCTC 2358 / NCIMB 9240 / NCTC 8049) protein is Ribose-5-phosphate isomerase A.